A 131-amino-acid chain; its full sequence is Small ribosomal subunit protein uS8 (131 aa).

It belongs to the universal ribosomal protein uS8 family. As to quaternary structure, part of the 30S ribosomal subunit. Contacts proteins S5 and S12.

In terms of biological role, one of the primary rRNA binding proteins, it binds directly to 16S rRNA central domain where it helps coordinate assembly of the platform of the 30S subunit. The chain is Small ribosomal subunit protein uS8 from Acinetobacter baylyi (strain ATCC 33305 / BD413 / ADP1).